A 340-amino-acid polypeptide reads, in one-letter code: MTMTAAVVREFGKPLVIEEVPVPQPGPGQVLIKYEATGVCHTDLHAAKGDWPVRPNPPFIPGHEGVGYVAKLGAEVTRLKEGDRVGVPWLHTACGCCTPCRTGWETLCGSQQNTGYSVDGTFAQYGLADPDFVGRLPARLEFGPAAPVLCAGVTVYKGLKETEVRPGEWVLVSGIGGLGHMAVQYAKAMGMHVAAADIFPDKLALAEKLGADLVVDARAPDAVEEVQRRTGGLHGALVTAVSPKAMEQAYSMLRSKGTMALVGLPPGQICLPVFDTVLKRITVRGSIVGTRQDLEEALEFAGEGKVAAHFSWDKIENINAIFERMEEGKIDGRIVLDLNG.

Residues cysteine 40 and histidine 63 each coordinate Zn(2+).

It belongs to the zinc-containing alcohol dehydrogenase family. Requires Zn(2+) as cofactor.

It catalyses the reaction a primary alcohol + NAD(+) = an aldehyde + NADH + H(+). The catalysed reaction is a secondary alcohol + NAD(+) = a ketone + NADH + H(+). In Rhizobium meliloti (strain 1021) (Ensifer meliloti), this protein is Alcohol dehydrogenase (adhA).